Reading from the N-terminus, the 361-residue chain is Pseudouridine-5'-phosphate glycosidase (361 aa).

Glu27 acts as the Proton donor in catalysis. Positions 88 and 108 each coordinate substrate. Asp140 contacts Mn(2+). 142–144 (SAD) lines the substrate pocket. Lys161 acts as the Nucleophile in catalysis. Positions 306-361 (DRSPTDPAAPDPTAPDPAAPDPTAPDPAAPDSAAPDLAGPDPSAPDPAAVARAHRP) are disordered. Residues 312 to 333 (PAAPDPTAPDPAAPDPTAPDPA) are compositionally biased toward pro residues. The span at 334 to 354 (APDSAAPDLAGPDPSAPDPAA) shows a compositional bias: low complexity.

The protein belongs to the pseudouridine-5'-phosphate glycosidase family. As to quaternary structure, homotrimer. Mn(2+) is required as a cofactor.

The enzyme catalyses D-ribose 5-phosphate + uracil = psi-UMP + H2O. Its function is as follows. Catalyzes the reversible cleavage of pseudouridine 5'-phosphate (PsiMP) to ribose 5-phosphate and uracil. Functions biologically in the cleavage direction, as part of a pseudouridine degradation pathway. This is Pseudouridine-5'-phosphate glycosidase from Frankia alni (strain DSM 45986 / CECT 9034 / ACN14a).